We begin with the raw amino-acid sequence, 243 residues long: Type III pantothenate kinase (243 aa).

6-13 contacts ATP; the sequence is DIGNTVAK. Residues Y86 and 93 to 96 each bind substrate; that span reads GYDR. D95 (proton acceptor) is an active-site residue. K(+) is bound at residue D116. T119 provides a ligand contact to ATP. T171 is a binding site for substrate.

This sequence belongs to the type III pantothenate kinase family. Homodimer. Requires NH4(+) as cofactor. K(+) serves as cofactor.

It localises to the cytoplasm. It carries out the reaction (R)-pantothenate + ATP = (R)-4'-phosphopantothenate + ADP + H(+). The protein operates within cofactor biosynthesis; coenzyme A biosynthesis; CoA from (R)-pantothenate: step 1/5. In terms of biological role, catalyzes the phosphorylation of pantothenate (Pan), the first step in CoA biosynthesis. This chain is Type III pantothenate kinase, found in Bacteroides fragilis (strain ATCC 25285 / DSM 2151 / CCUG 4856 / JCM 11019 / LMG 10263 / NCTC 9343 / Onslow / VPI 2553 / EN-2).